The primary structure comprises 1256 residues: Neuronal cell adhesion molecule (1256 aa).

The signal sequence occupies residues 1–29 (MQLKIMPKKKHLSAGGVPLILFLCQMISA). Residues 30 to 1119 (LDVPLDLVQP…ASRQVDIATQ (1090 aa)) are Extracellular-facing. Ig-like C2-type domains are found at residues 40-128 (PTIT…AAVS) and 135-229 (PSRS…QPIS). 2 disulfides stabilise this stretch: Cys62/Cys117 and Cys161/Cys212. N-linked (GlcNAc...) asparagine glycosylation occurs at Asn77. 6 N-linked (GlcNAc...) asparagine glycosylation sites follow: Asn217, Asn239, Asn245, Asn270, Asn308, and Asn371. Ig-like C2-type domains lie at 261–350 (PPTF…ISVT), 355–442 (PYWI…AFVN), 448–535 (PRIL…VHLE), and 539–626 (PTRI…AVLR). Cys286 and Cys334 are joined by a disulfide. A disulfide bridge connects residues Cys376 and Cys426. N-linked (GlcNAc...) asparagine glycans are attached at residues Asn427 and Asn501. Cystine bridges form between Cys470–Cys519 and Cys561–Cys610. N-linked (GlcNAc...) asparagine glycosylation is found at Asn613, Asn710, Asn796, Asn852, Asn987, Asn1003, Asn1013, and Asn1067. Fibronectin type-III domains are found at residues 643–738 (PPFD…TKAA), 740–837 (PDQN…SGED), 842–944 (APGN…TPEG), and 948–1045 (APSS…VDEA). A helical membrane pass occupies residues 1120–1142 (GWFIGLMCAVALLILILLIVCFI). Residues 1143–1256 (RRNKGGKYPV…SPVNAMNSFV (114 aa)) lie on the Cytoplasmic side of the membrane. Basic and acidic residues predominate over residues 1151 to 1171 (PVKEKEDAHADPEIQPMKEDD). Residues 1151–1256 (PVKEKEDAHA…SPVNAMNSFV (106 aa)) form a disordered region. The residue at position 1173 (Thr1173) is a Phosphothreonine. Tyr1177 is subject to Phosphotyrosine. Ser1178 bears the Phosphoserine mark. The span at 1193–1202 (PSDRTVKKED) shows a compositional bias: basic and acidic residues. A phosphoserine mark is found at Ser1203, Ser1206, Ser1223, Ser1242, Ser1243, and Ser1247. The span at 1240 to 1256 (NESSEAPSPVNAMNSFV) shows a compositional bias: polar residues.

This sequence belongs to the immunoglobulin superfamily. L1/neurofascin/NgCAM family. As to quaternary structure, constituent of a NFASC/NRCAM/ankyrin-G complex. Detected in a complex with CNTN1 and PTPRB. Interacts with GLDN/gliomedin and MYOC. In terms of tissue distribution, detected in sciatic nerve. Detected in brain, especially in the cerebellum Purkinje cell layer, inner granule cell layer and molecular layer (at protein level). Detected in neurons and Schwann cells.

It is found in the cell membrane. Its subcellular location is the cell projection. It localises to the axon. The protein localises to the secreted. In terms of biological role, cell adhesion protein that is required for normal responses to cell-cell contacts in brain and in the peripheral nervous system. Plays a role in neurite outgrowth in response to contactin binding. Plays a role in mediating cell-cell contacts between Schwann cells and axons. Plays a role in the formation and maintenance of the nodes of Ranvier on myelinated axons. Nodes of Ranvier contain clustered sodium channels that are crucial for the saltatory propagation of action potentials along myelinated axons. During development, nodes of Ranvier are formed by the fusion of two heminodes. Required for normal clustering of sodium channels at heminodes; not required for the formation of mature nodes with normal sodium channel clusters. Required, together with GLDN, for maintaining NFASC and sodium channel clusters at mature nodes of Ranvier. In Mus musculus (Mouse), this protein is Neuronal cell adhesion molecule (Nrcam).